A 564-amino-acid polypeptide reads, in one-letter code: Diacylglycerol kinase epsilon (564 aa).

Residues 20-40 form a helical membrane-spanning segment; it reads LVLWTLCSVLLPVFITLWCSL. 2 consecutive Phorbol-ester/DAG-type zinc fingers follow at residues 57–106 and 121–174; these read KHCW…RFPC and PHHW…SEKC. The DAGKc domain occupies 212–353; that stretch reads KQWTPLIILA…LDRWKVQVTN (142 aa).

Belongs to the eukaryotic diacylglycerol kinase family. In terms of tissue distribution, highly expressed in brain and heart. In brain, highly expressed in Purkinje cells of the cerebellum, pyramidal cells of the hippocampus, mitral cells of the olfactory bulb, and neurons of the substantia nigra. Lower expression in neurons of the thalamus, superior olive, and lateral reticular nucleus is also detected. Expressed in platelets.

It is found in the membrane. The protein resides in the cytoplasm. It carries out the reaction a 1,2-diacyl-sn-glycerol + ATP = a 1,2-diacyl-sn-glycero-3-phosphate + ADP + H(+). The enzyme catalyses 1-hexadecanoyl-2-(5Z,8Z,11Z,14Z-eicosatetraenoyl)-sn-glycerol + ATP = 1-hexadecanoyl-2-(5Z,8Z,11Z,14Z-eicosatetraenoyl)-sn-glycero-3-phosphate + ADP + H(+). The catalysed reaction is 1-octadecanoyl-2-(5Z,8Z,11Z,14Z-eicosatetraenoyl)-sn-glycerol + ATP = 1-octadecanoyl-2-(5Z,8Z,11Z,14Z-eicosatetraenoyl)-sn-glycero-3-phosphate + ADP + H(+). It catalyses the reaction 1-eicosanoyl-2-(5Z,8Z,11Z,14Z)-eicosatetraenoyl-sn-glycerol + ATP = 1-eicosanoyl-2-(5Z,8Z,11Z,14Z)-eicosatetraenoyl-sn-glycero-3-phosphate + ADP + H(+). It carries out the reaction 1,2-di-(5Z,8Z,11Z,14Z)-eicosatetraenoyl-sn-glycerol + ATP = 1,2-di-(5Z,8Z,11Z,14Z)-eicosatetraenoyl-sn-glycero-3-phosphate + ADP + H(+). The enzyme catalyses 1-octadecanoyl-2-(9Z,12Z)-octadecadienoyl-sn-glycerol + ATP = 1-octadecanoyl-2-(9Z,12Z-octadecadienoyl)-sn-glycero-3-phosphate + ADP + H(+). The catalysed reaction is 1,2-di-(9Z,12Z-octadecadienoyl)-sn-glycerol + ATP = 1,2-di-(9Z,12Z-octadecadienoyl)-sn-glycero-3-phosphate + ADP + H(+). It catalyses the reaction 1,2-di-(9Z-octadecenoyl)-sn-glycerol + ATP = 1,2-di-(9Z-octadecenoyl)-sn-glycero-3-phosphate + ADP + H(+). It participates in lipid metabolism; glycerolipid metabolism. Its function is as follows. Membrane-bound diacylglycerol kinase that converts diacylglycerol/DAG into phosphatidic acid/phosphatidate/PA and regulates the respective levels of these two bioactive lipids. Thereby, acts as a central switch between the signaling pathways activated by these second messengers with different cellular targets and opposite effects in numerous biological processes. Also plays an important role in the biosynthesis of complex lipids. Displays specificity for diacylglycerol substrates with an arachidonoyl acyl chain at the sn-2 position, with the highest activity toward 1-octadecanoyl-2-(5Z,8Z,11Z,14Z-eicosatetraenoyl)-sn-glycerol the main diacylglycerol intermediate within the phosphatidylinositol turnover cycle. Can also phosphorylate diacylglycerol substrates with a linoleoyl acyl chain at the sn-2 position but much less efficiently. This chain is Diacylglycerol kinase epsilon (Dgke), found in Mus musculus (Mouse).